We begin with the raw amino-acid sequence, 380 residues long: Chaperone protein DnaJ (380 aa).

The J domain occupies 5–70 (DYYEALGVAR…RKRTAYDQFG (66 aa)). A CR-type zinc finger spans residues 137–215 (GTTAKIRIPT…CRGEGRVREH (79 aa)). The Zn(2+) site is built by Cys150, Cys153, Cys167, Cys170, Cys189, Cys192, Cys203, and Cys206. CXXCXGXG motif repeat units follow at residues 150-157 (CKACEGSG), 167-174 (CPTCGGHG), 189-196 (CPRCHGSG), and 203-210 (CSTCRGEG). The tract at residues 222–247 (IPPGVDTGDRIRLTGEGEAGESGGPP) is disordered.

The protein belongs to the DnaJ family. As to quaternary structure, homodimer. Requires Zn(2+) as cofactor.

The protein localises to the cytoplasm. In terms of biological role, participates actively in the response to hyperosmotic and heat shock by preventing the aggregation of stress-denatured proteins and by disaggregating proteins, also in an autonomous, DnaK-independent fashion. Unfolded proteins bind initially to DnaJ; upon interaction with the DnaJ-bound protein, DnaK hydrolyzes its bound ATP, resulting in the formation of a stable complex. GrpE releases ADP from DnaK; ATP binding to DnaK triggers the release of the substrate protein, thus completing the reaction cycle. Several rounds of ATP-dependent interactions between DnaJ, DnaK and GrpE are required for fully efficient folding. Also involved, together with DnaK and GrpE, in the DNA replication of plasmids through activation of initiation proteins. The polypeptide is Chaperone protein DnaJ (Nitrosococcus oceani (strain ATCC 19707 / BCRC 17464 / JCM 30415 / NCIMB 11848 / C-107)).